A 365-amino-acid chain; its full sequence is GDSL esterase/lipase At3g62280 (365 aa).

The first 25 residues, 1-25 (MDYTVSSLQCFFLVLCLSLLVCSNS), serve as a signal peptide directing secretion. Ser43 serves as the catalytic Nucleophile. Asn137, Asn178, and Asn231 each carry an N-linked (GlcNAc...) asparagine glycan. Active-site residues include Asp333 and His336.

This sequence belongs to the 'GDSL' lipolytic enzyme family.

It is found in the secreted. This is GDSL esterase/lipase At3g62280 from Arabidopsis thaliana (Mouse-ear cress).